We begin with the raw amino-acid sequence, 204 residues long: Translation initiation factor 2 subunit beta (204 aa).

The TRAM domain maps to 146-204; the sequence is AIEEGKELEVHIESISKKGDGVARIGKYILYVAGTKAGQNVKVRITRISGQVAFTQKIL.

The protein belongs to the eIF-2-beta/eIF-5 family. In terms of assembly, heterotrimer composed of an alpha, a beta and a gamma chain.

In terms of biological role, eIF-2 functions in the early steps of protein synthesis by forming a ternary complex with GTP and initiator tRNA. The chain is Translation initiation factor 2 subunit beta from Methanocorpusculum labreanum (strain ATCC 43576 / DSM 4855 / Z).